The sequence spans 256 residues: 5'-nucleotidase SurE (256 aa).

A divalent metal cation is bound by residues Asp-9, Asp-10, Ser-40, and Asn-94.

It belongs to the SurE nucleotidase family. A divalent metal cation serves as cofactor.

The protein localises to the cytoplasm. The catalysed reaction is a ribonucleoside 5'-phosphate + H2O = a ribonucleoside + phosphate. Functionally, nucleotidase that shows phosphatase activity on nucleoside 5'-monophosphates. The chain is 5'-nucleotidase SurE from Campylobacter fetus subsp. fetus (strain 82-40).